The chain runs to 206 residues: Probable nicotinate-nucleotide adenylyltransferase (206 aa).

Belongs to the NadD family.

The enzyme catalyses nicotinate beta-D-ribonucleotide + ATP + H(+) = deamido-NAD(+) + diphosphate. Its pathway is cofactor biosynthesis; NAD(+) biosynthesis; deamido-NAD(+) from nicotinate D-ribonucleotide: step 1/1. Its function is as follows. Catalyzes the reversible adenylation of nicotinate mononucleotide (NaMN) to nicotinic acid adenine dinucleotide (NaAD). The chain is Probable nicotinate-nucleotide adenylyltransferase from Paenarthrobacter aurescens (strain TC1).